The chain runs to 271 residues: MSALLGLPPEVQDTCISLGLMLLVVLFMGLARVIARQQLHRPMVHAFVLEFLATFQLCYCTHELQLLSEQDSGHPTWTLTLIYFFSLVHGLTLVGTASNPCGVMMQMILGGMSPEMGAVRLMAQLVSALCSRYCISALWSLSLTKYHFDERILACRNPINTDISKAIIIEAICSFIFHSALLHFQEVRTKLRIHVLAALITFLAYAGGSLTGALFNPALALSLHFPCFDESFYKFFVVYWVAPSLGVLLMILMFSFFLPWLHNNQLSNKKE.

Topologically, residues 1–14 are cytoplasmic; the sequence is MSALLGLPPEVQDT. The chain crosses the membrane as a helical span at residues 15–35; the sequence is CISLGLMLLVVLFMGLARVIA. At 36 to 41 the chain is on the lumenal side; it reads RQQLHR. A helical membrane pass occupies residues 42 to 62; that stretch reads PMVHAFVLEFLATFQLCYCTH. Residues 63 to 76 lie on the Cytoplasmic side of the membrane; sequence ELQLLSEQDSGHPT. The chain crosses the membrane as a helical span at residues 77 to 97; it reads WTLTLIYFFSLVHGLTLVGTA. Topologically, residues 98-166 are lumenal; that stretch reads SNPCGVMMQM…NPINTDISKA (69 aa). The NPC signature appears at 99-101; it reads NPC. The helical transmembrane segment at 167 to 187 threads the bilayer; sequence IIIEAICSFIFHSALLHFQEV. The Cytoplasmic segment spans residues 188–194; the sequence is RTKLRIH. The helical transmembrane segment at 195–215 threads the bilayer; the sequence is VLAALITFLAYAGGSLTGALF. The NPA signature appears at 216 to 218; the sequence is NPA. Residues 216 to 234 lie on the Lumenal side of the membrane; it reads NPALALSLHFPCFDESFYK. The helical transmembrane segment at 235–255 threads the bilayer; the sequence is FFVVYWVAPSLGVLLMILMFS. The Cytoplasmic segment spans residues 256–271; that stretch reads FFLPWLHNNQLSNKKE.

Belongs to the MIP/aquaporin (TC 1.A.8) family. AQP11/AQP12 subfamily. Homodimer; disulfide-linked. Homotetramer. Can also form homomultimer. Post-translationally, not glycosylated. Expressed in retina specifically at retinal Mueller glial cells. Expressed in adult testis, in the elongated spermatids (ES) and in residual bodies inside Sertoli cells.

Its subcellular location is the endoplasmic reticulum membrane. It is found in the cytoplasmic vesicle membrane. The protein localises to the cell membrane. The enzyme catalyses H2O(in) = H2O(out). It catalyses the reaction glycerol(in) = glycerol(out). The catalysed reaction is H2O2(out) = H2O2(in). In terms of biological role, channel protein that facilitates the transport of water, glycerol and hydrogen peroxide across membrane of cell or organelles guaranteeing intracellular homeostasis in several organes like liver, kidney and brain. In situation of stress, participates in endoplasmic reticulum (ER) homeostasis by regulating redox homeostasis through the transport of hydrogen peroxide across the endoplasmic reticulum membrane thereby regulating the oxidative stress through the NADPH oxidase 2 pathway. Plays a role by maintaining an environment suitable for translation or protein foldings in the ER lumen namely by participating in the PKD1 glycosylation processing resulting in regulation of PKD1 membrane trafficking thereby preventing the accumulation of unfolding protein in ER. Plays a role in the proximal tubule function by regulating its endosomal acidification. May play a role in postnatal kidney development. The chain is Aquaporin-11 from Rattus norvegicus (Rat).